We begin with the raw amino-acid sequence, 239 residues long: MNSTAAAINPNPNVIPFDDTYILYDSHDFLSFLSAYFSLMPILVLAFYLSWFIITRELEACIVAFGQLMNEIFNNVIKNIIKQPRPVSFGASFQNDTIRSGYGMPSAHSQFMGFCFTYNSLKIYTSWKNLNFLEKCIFSGALALLSFCVCFSRVYLHYHNLDQVIVGFSVGALTGSLYFFIVGIIRELGLINWFLKLRIVRLFYMTDSYNLAPLTLKENYEAYWKRINQRSFNDKSKRD.

Residues 1–34 (MNSTAAAINPNPNVIPFDDTYILYDSHDFLSFLS) are Lumenal-facing. A helical membrane pass occupies residues 35 to 55 (AYFSLMPILVLAFYLSWFIIT). Residues 56-131 (RELEACIVAF…KIYTSWKNLN (76 aa)) are Cytoplasmic-facing. The chain crosses the membrane as a helical span at residues 132 to 152 (FLEKCIFSGALALLSFCVCFS). Over 153–164 (RVYLHYHNLDQV) the chain is Lumenal. The chain crosses the membrane as a helical span at residues 165 to 185 (IVGFSVGALTGSLYFFIVGII). Residues 186–239 (RELGLINWFLKLRIVRLFYMTDSYNLAPLTLKENYEAYWKRINQRSFNDKSKRD) lie on the Cytoplasmic side of the membrane.

It belongs to the dolichyldiphosphatase family.

The protein localises to the endoplasmic reticulum membrane. The catalysed reaction is a di-trans,poly-cis-dolichyl diphosphate + H2O = a di-trans,poly-cis-dolichyl phosphate + phosphate + H(+). Its pathway is protein modification; protein glycosylation. Its function is as follows. Non-essential protein which is required for efficient N-glycosylation. Necessary for maintaining optimal levels of dolichol-linked oligosaccharides. Hydrolyzes dolichyl pyrophosphate at a very high rate and dolichyl monophosphate at a much lower rate. Does not act on phosphatidate. The protein is Dolichyldiphosphatase (CAX4) of Saccharomyces cerevisiae (strain ATCC 204508 / S288c) (Baker's yeast).